The chain runs to 544 residues: CTP synthase (544 aa).

An amidoligase domain region spans residues 1-266 (MATNYIFVTG…DDFVCDRFRL (266 aa)). Ser-14 contacts CTP. Ser-14 contributes to the UTP binding site. Residues 15-20 (SLGKGI) and Asp-72 contribute to the ATP site. Residues Asp-72 and Glu-140 each contribute to the Mg(2+) site. CTP-binding positions include 147-149 (DIE), 187-192 (KTKPTQ), and Lys-223. UTP-binding positions include 187 to 192 (KTKPTQ) and Lys-223. 239 to 241 (KDV) is a binding site for ATP. Positions 291–542 (TIGMVGKYVE…VKAAKEHQGK (252 aa)) constitute a Glutamine amidotransferase type-1 domain. Gly-352 contributes to the L-glutamine binding site. The active-site Nucleophile; for glutamine hydrolysis is the Cys-379. Residues 380-383 (LGMQ), Glu-403, and Arg-470 contribute to the L-glutamine site. Residues His-515 and Glu-517 contribute to the active site.

Belongs to the CTP synthase family. In terms of assembly, homotetramer.

The enzyme catalyses UTP + L-glutamine + ATP + H2O = CTP + L-glutamate + ADP + phosphate + 2 H(+). The catalysed reaction is L-glutamine + H2O = L-glutamate + NH4(+). It catalyses the reaction UTP + NH4(+) + ATP = CTP + ADP + phosphate + 2 H(+). The protein operates within pyrimidine metabolism; CTP biosynthesis via de novo pathway; CTP from UDP: step 2/2. With respect to regulation, allosterically activated by GTP, when glutamine is the substrate; GTP has no effect on the reaction when ammonia is the substrate. The allosteric effector GTP functions by stabilizing the protein conformation that binds the tetrahedral intermediate(s) formed during glutamine hydrolysis. Inhibited by the product CTP, via allosteric rather than competitive inhibition. Functionally, catalyzes the ATP-dependent amination of UTP to CTP with either L-glutamine or ammonia as the source of nitrogen. Regulates intracellular CTP levels through interactions with the four ribonucleotide triphosphates. This is CTP synthase from Glaesserella parasuis serovar 5 (strain SH0165) (Haemophilus parasuis).